The sequence spans 420 residues: UDP-N-acetylglucosamine 1-carboxyvinyltransferase (420 aa).

23–24 lines the phosphoenolpyruvate pocket; sequence KN. Position 92 (R92) interacts with UDP-N-acetyl-alpha-D-glucosamine. The active-site Proton donor is the C116. A 2-(S-cysteinyl)pyruvic acid O-phosphothioketal modification is found at C116. Residues 121-125, 161-164, D306, and I328 each bind UDP-N-acetyl-alpha-D-glucosamine; these read RPVDL and KVSV.

It belongs to the EPSP synthase family. MurA subfamily.

The protein resides in the cytoplasm. The catalysed reaction is phosphoenolpyruvate + UDP-N-acetyl-alpha-D-glucosamine = UDP-N-acetyl-3-O-(1-carboxyvinyl)-alpha-D-glucosamine + phosphate. It functions in the pathway cell wall biogenesis; peptidoglycan biosynthesis. Functionally, cell wall formation. Adds enolpyruvyl to UDP-N-acetylglucosamine. The sequence is that of UDP-N-acetylglucosamine 1-carboxyvinyltransferase from Photobacterium profundum (strain SS9).